A 680-amino-acid polypeptide reads, in one-letter code: Lipase 1 (680 aa).

The signal sequence occupies residues 1-34 (MKSQNKYSIRKFSVGASSILIATLLFLSGGQAQA). A propeptide spanning residues 35–290 (AEKQVNMGNS…AKAKDDQTNK (256 aa)) is cleaved from the precursor. Positions 82–259 (KNLHNDKTIS…PTKDNDKKNG (178 aa)) are disordered. The segment covering 84 to 111 (LHNDKTISEENHRKTDDLNKDQLKDDKN) has biased composition (basic and acidic residues). Polar residues-rich tracts occupy residues 125 to 138 (KNNN…NQGL), 162 to 193 (SQDS…SQRE), and 204 to 223 (QPQQ…FNNE). Basic and acidic residues predominate over residues 224-234 (QEVKPQKDEKT). A compositionally biased stretch (polar residues) spans 235–246 (LSVSDLKNNQKS). The active-site Nucleophile is the Ser408. Catalysis depends on Asp600, which acts as the Charge relay system. Position 638 (Asp638) interacts with Ca(2+). His639 functions as the Charge relay system in the catalytic mechanism. Ca(2+) is bound by residues Asp641, Asp646, and Asp649.

Belongs to the AB hydrolase superfamily. Lipase family.

The protein resides in the secreted. It carries out the reaction a triacylglycerol + H2O = a diacylglycerol + a fatty acid + H(+). This Staphylococcus aureus (strain Mu50 / ATCC 700699) protein is Lipase 1 (lip1).